The following is an 842-amino-acid chain: Pentatricopeptide repeat-containing protein At3g23020 (842 aa).

The tract at residues 40-61 (YVPGTHESDKGPQRSTRNGDRG) is disordered. Residues 45–59 (HESDKGPQRSTRNGD) are compositionally biased toward basic and acidic residues. PPR repeat units lie at residues 186–220 (NVIHYNIMLRILGKACKWRYVQSLWDEMIRKGIKP), 221–255 (INSTYGTLIDVYSKGGLKVHALCWLGKMSKIGMQP), 256–290 (DEVTTGIVLQMYKKAREFQKAEEFFKKWSCDENKA), 297–331 (SSYTYNTMIDTYGKSGQIKEASETFKRMLEEGIVP), 332–362 (TTVTFNTMIHIYGNNGQLGEVTSLMKTMKLH), 366–400 (DTRTYNILISLHTKNNDIERAGAYFKEMKDDGLKP), 401–435 (DPVSYRTLLYAFSIRHMVEEAEGLIAEMDDDNVEI), 436–470 (DEYTQSALTRMYVEAEMLEKSWSWFKRFHVAGNMS), 474–500 (YSANIDAYGERGYLSEAERVFICCQEV), 504–538 (TVIEYNVMIKAYGISKSCEKACELFESMMSYGVTP), 539–573 (DKCTYNTLVQILASADMPHKGRCYLEKMRETGYVS), 574–608 (DCIPYCAVISSFVKLGQLNMAEEVYKEMVEYNIEP), 609–643 (DVVVYGVLINAFADTGNVQQAMSYVEAMKEAGIPG), 644–674 (NSVIYNSLIKLYTKVGYLDEAEAIYRKLLQS), 682–712 (DVYTSNCMINLYSERSMVRKAEAIFDSMKQR), 716–750 (NEFTFAMMLCMYKKNGRFEEATQIAKQMREMKILT), 751–785 (DPLSYNSVLGLFALDGRFKEAVETFKEMVSSGIQP), and 786–820 (DDSTFKSLGTILMKLGMSKKAVRKIEEIRKKEIKR).

The protein belongs to the PPR family. P subfamily.

The polypeptide is Pentatricopeptide repeat-containing protein At3g23020 (Arabidopsis thaliana (Mouse-ear cress)).